Consider the following 203-residue polypeptide: MSRYTGPSWKQSRRYGISLTGSGKEIARRNYVPGQHGPNNRSKLSEYGLQLAEKQKLRFTYGLSERQFRNLYVAATKVKEGTVGYNFMTLLEQRLDNVVYRLGLATTRRQARQFVNHGHILVDGKRVDIPSFRVQPGQVISVREKSMKVPAILEAVEATKGRANFVSFDADKLEGTLVRLPERDEINPEINDALIVEFYNKMM.

The S4 RNA-binding domain occupies 93–156 (QRLDNVVYRL…MKVPAILEAV (64 aa)).

The protein belongs to the universal ribosomal protein uS4 family. In terms of assembly, part of the 30S ribosomal subunit. Contacts protein S5. The interaction surface between S4 and S5 is involved in control of translational fidelity.

One of the primary rRNA binding proteins, it binds directly to 16S rRNA where it nucleates assembly of the body of the 30S subunit. Its function is as follows. With S5 and S12 plays an important role in translational accuracy. This is Small ribosomal subunit protein uS4 from Lactococcus lactis subsp. cremoris (strain MG1363).